The sequence spans 972 residues: Hemoglobin and hemoglobin-haptoglobin-binding protein (972 aa).

The signal sequence occupies residues 1–22; the sequence is MKANKLSAITLCILGYAHTVYA. A TonB box motif is present at residues 32–39; that stretch reads ETIVVSSE. The TBDR plug domain occupies 38–167; that stretch reads SEDDSVHNKN…LGGTVSFESK (130 aa). Residues 175-972 form the TBDR beta-barrel domain; that stretch reads DKNYHFGYKT…NFRVNAEITF (798 aa). The TonB C-terminal box signature appears at 955 to 972; the sequence is KRFNAPGRNFRVNAEITF.

Belongs to the TonB-dependent receptor family. Hemoglobin/haptoglobin binding protein subfamily.

The protein resides in the cell outer membrane. Its function is as follows. Acts as a receptor for hemoglobin or the hemoglobin/haptoglobin complex of the host and is required for heme uptake. May be involved in virulence. The polypeptide is Hemoglobin and hemoglobin-haptoglobin-binding protein (Haemophilus ducreyi (strain 35000HP / ATCC 700724)).